Here is a 1013-residue protein sequence, read N- to C-terminus: GTPase-activating protein BEM3 (1013 aa).

Disordered stretches follow at residues 90 to 197 (TVVE…GSPA), 258 to 277 (GSRY…PESI), 282 to 301 (SDLQ…TDLG), and 307 to 421 (VDTT…HQSK). The segment covering 143–160 (QEATSGAQQVPLLTSSKS) has biased composition (polar residues). Composition is skewed to polar residues over residues 309–319 (TTFNAEDNPTG), 333–388 (TLQN…TSSN), and 404–418 (KSYS…SNSH). The PH domain maps to 555-662 (EFAKEGMLLV…WISVLTTLCD (108 aa)). The disordered stretch occupies residues 702–726 (AMDATSPTRPNDPNPVSLTSEEEKE). Positions 706–720 (TSPTRPNDPNPVSLT) are enriched in polar residues. A Rho-GAP domain is found at 799-1013 (LQLSSHPYQG…PPVNIHIPQI (215 aa)).

It is found in the cytoplasm. Its function is as follows. GTPase-activating protein (GAP) for CDC42 and less efficiently for RHO1. Negative regulator of the pheromone-response pathway through the STE20 protein kinase. The chain is GTPase-activating protein BEM3 (BEM3) from Eremothecium gossypii (strain ATCC 10895 / CBS 109.51 / FGSC 9923 / NRRL Y-1056) (Yeast).